Reading from the N-terminus, the 95-residue chain is Beta-defensin 132 (95 aa).

The first 22 residues, 1 to 22 (MKFLLLVLAALGFLTQVIPASG), serve as a signal peptide directing secretion. Disulfide bonds link Cys-27–Cys-55, Cys-35–Cys-49, and Cys-39–Cys-56. The disordered stretch occupies residues 72 to 95 (GNHWPSRSRNTQRKNKKQQTTVTP).

Belongs to the beta-defensin family.

The protein localises to the secreted. Its function is as follows. Has antibacterial activity. The chain is Beta-defensin 132 (DEFB132) from Macaca fascicularis (Crab-eating macaque).